The following is a 329-amino-acid chain: Mas-related G-protein coupled receptor member X2 (329 aa).

At 1-33 (MDPTTPAWGTESTTMNGNDQALPLLCGKETMIS) the chain is on the extracellular side. A helical transmembrane segment spans residues 34–54 (VFLILFIALVGLVGNAFVLWL). Residues 55-63 (LGFRMRRNA) are Cytoplasmic-facing. The helical transmembrane segment at 64 to 84 (FSVYVLSLAGADFLFLCFQMT) threads the bilayer. Over 85–96 (SCLAYLINFFGS) the chain is Extracellular. A helical membrane pass occupies residues 97-116 (ISINIPSFFTVMTCAYLAGL). Residues 117 to 143 (SMLSAISTERCLSVLWPIWYRCRRPRH) lie on the Cytoplasmic side of the membrane. A helical membrane pass occupies residues 144–164 (LSAVMCVLLWALSLLLSILEG). Topologically, residues 165 to 183 (KFCGFLFSDDDPGWCQTFD) are extracellular. The helical transmembrane segment at 184-204 (FITAAWLMFLFVVLCGSSLAL) threads the bilayer. At 205–227 (LVRILCGSRSLPLTRLYLTILLT) the chain is on the cytoplasmic side. Residues 228 to 248 (VLIFLLCGLPFGIQWFLILWI) form a helical membrane-spanning segment. Over 249–263 (WKNSVVLFCHIHPIS) the chain is Extracellular. Residues 264–284 (VVLSSFNSSANPIIYFFVGSF) traverse the membrane as a helical segment. The Cytoplasmic segment spans residues 285–329 (RKQWRLRQPILKLALQRALQDTAEVDHSEGCFSQGTLEMSRSSLV).

It belongs to the G-protein coupled receptor 1 family. Mas subfamily.

It localises to the cell membrane. Functionally, mast cell-specific receptor for basic secretagogues, i.e. cationic amphiphilic drugs, as well as endo- or exogenous peptides, consisting of a basic head group and a hydrophobic core. Recognizes and binds small molecules containing a cyclized tetrahydroisoquinoline (THIQ), such as non-steroidal neuromuscular blocking drugs (NMBDs), including tubocurarine and atracurium. In response to these compounds, mediates pseudo-allergic reactions characterized by histamine release, inflammation and airway contraction. This is Mas-related G-protein coupled receptor member X2 (MRGPRX2) from Macaca mulatta (Rhesus macaque).